The primary structure comprises 127 residues: Small ribosomal subunit protein uS11 (127 aa).

This sequence belongs to the universal ribosomal protein uS11 family. Part of the 30S ribosomal subunit. Interacts with proteins S7 and S18. Binds to IF-3.

In terms of biological role, located on the platform of the 30S subunit, it bridges several disparate RNA helices of the 16S rRNA. Forms part of the Shine-Dalgarno cleft in the 70S ribosome. The polypeptide is Small ribosomal subunit protein uS11 (Streptococcus agalactiae serotype Ia (strain ATCC 27591 / A909 / CDC SS700)).